A 295-amino-acid polypeptide reads, in one-letter code: Ribosomal protein L11 methyltransferase (295 aa).

S-adenosyl-L-methionine-binding residues include T145, G166, D188, and N230.

The protein belongs to the methyltransferase superfamily. PrmA family.

The protein localises to the cytoplasm. It carries out the reaction L-lysyl-[protein] + 3 S-adenosyl-L-methionine = N(6),N(6),N(6)-trimethyl-L-lysyl-[protein] + 3 S-adenosyl-L-homocysteine + 3 H(+). In terms of biological role, methylates ribosomal protein L11. This Pectobacterium atrosepticum (strain SCRI 1043 / ATCC BAA-672) (Erwinia carotovora subsp. atroseptica) protein is Ribosomal protein L11 methyltransferase.